The sequence spans 99 residues: DNA-directed RNA polymerase subunit omega (99 aa).

Belongs to the RNA polymerase subunit omega family. As to quaternary structure, the RNAP catalytic core consists of 2 alpha, 1 beta, 1 beta' and 1 omega subunit. When a sigma factor is associated with the core the holoenzyme is formed, which can initiate transcription.

It carries out the reaction RNA(n) + a ribonucleoside 5'-triphosphate = RNA(n+1) + diphosphate. In terms of biological role, promotes RNA polymerase assembly. Latches the N- and C-terminal regions of the beta' subunit thereby facilitating its interaction with the beta and alpha subunits. This is DNA-directed RNA polymerase subunit omega (rpoZ) from Xylella fastidiosa (strain 9a5c).